We begin with the raw amino-acid sequence, 40 residues long: Photosystem II reaction center protein J (40 aa).

Residues 8-28 (IPLWLIGTVTGIPVIGLVGIF) traverse the membrane as a helical segment.

The protein belongs to the PsbJ family. PSII is composed of 1 copy each of membrane proteins PsbA, PsbB, PsbC, PsbD, PsbE, PsbF, PsbH, PsbI, PsbJ, PsbK, PsbL, PsbM, PsbT, PsbX, PsbY, PsbZ, Psb30/Ycf12, at least 3 peripheral proteins of the oxygen-evolving complex and a large number of cofactors. It forms dimeric complexes.

The protein localises to the plastid. It is found in the chloroplast thylakoid membrane. In terms of biological role, one of the components of the core complex of photosystem II (PSII). PSII is a light-driven water:plastoquinone oxidoreductase that uses light energy to abstract electrons from H(2)O, generating O(2) and a proton gradient subsequently used for ATP formation. It consists of a core antenna complex that captures photons, and an electron transfer chain that converts photonic excitation into a charge separation. In Cucumis sativus (Cucumber), this protein is Photosystem II reaction center protein J.